Here is a 20-residue protein sequence, read N- to C-terminus: Poneritoxin (20 aa).

Residue Met18 is modified to Methionine sulfoxide; in form U1-PONTX-Dq3c. Lysine amide; in form U1-PONTX-Dq3a and U1-PONTX-Dq3c is present on Lys19.

The peptide spanning residues 2 to 19 occurs in 3 forms and has been given 3 different names. U1-PONTX-Dq3a has an amidated Lys-19, U1-PONTX-Dq3c has an amidated Lys-19 and an oxidized Met-18, and U1-PONTX-Dq3b has no modifications at either Met-18 or Lys-19. As to expression, expressed by the venom gland.

The protein localises to the secreted. Its function is as follows. May have antimicrobial properties, like most ant linear peptides. This chain is Poneritoxin, found in Dinoponera quadriceps (South American ant).